Consider the following 249-residue polypeptide: Proteasome activator complex subunit 1 (249 aa).

Positions Pro-60–Cys-101 are disordered. Residues Pro-68–Gly-98 are compositionally biased toward basic and acidic residues.

This sequence belongs to the PA28 family. In terms of assembly, heterodimer of PSME1 and PSME2, which forms a hexameric ring. PSME1 can form homoheptamers.

Its function is as follows. Implicated in immunoproteasome assembly and required for efficient antigen processing. The PA28 activator complex enhances the generation of class I binding peptides by altering the cleavage pattern of the proteasome. This is Proteasome activator complex subunit 1 (PSME1) from Macaca fascicularis (Crab-eating macaque).